The primary structure comprises 345 residues: MNSKLFSPYTIKNVTLKNRIVMSPMCMYSSGNEDGRVTNFHLIHYGTRAAGQVGLVMVEATAVLAEGRISNKDLGIWDDNLIEGLHKTTTFIHDNGAKAAIQLAHAGRKAELGTNAFAPSAIPFSDTMKIPVEMNIQQIKETILAFQRAALRSKQAGFDVIELHGAHGYLINEFLSPLTNKRTDEYGGSPENRYRFLREIIDSVNKVWDGPIFVRISANDYHPDGLTVQDYVQYTKWMKEQGIDLIDCSSGAVVPAHIDVYPGYQVQYAKHIKEYTKIATGAVGLITTGSQAEQILNDNEADLIFIGRELLRNPYFPRIAANELGFELQEPHQYKRAPGKIHTNK.

Ser-23 to Cys-26 is an FMN binding site. Tyr-28 contacts substrate. FMN contacts are provided by Ala-60 and Gln-102. His-164 to His-167 contacts substrate. FMN is bound by residues Arg-215 and Gly-307–Arg-308.

This sequence belongs to the NADH:flavin oxidoreductase/NADH oxidase family. NamA subfamily. As to quaternary structure, homotetramer. Requires FMN as cofactor.

The enzyme catalyses A + NADPH + H(+) = AH2 + NADP(+). Catalyzes the reduction of the double bond of an array of alpha,beta-unsaturated aldehydes and ketones. It also reduces the nitro group of nitroester and nitroaromatic compounds. It could have a role in detoxification processes. The polypeptide is NADPH dehydrogenase (Bacillus cereus (strain G9842)).